The sequence spans 195 residues: MQPNITGVILAGGRSSRMGGNDKGLIPLNGKPLFQYVIDRFKPQVSDLLINANRNQGLYKESGIPVIDDIITGFVGPLAGMHAGLSYASTEWVVFAPCDVPALPSDLVSQLWQGKKQALAAYANDDERAHPTFALMHISLKTQLADYLIRGDRKLMLFLDSINAQRVKFSGKADLFSNLNTPADCDLWEQKRRGQ.

Residues 10–12 (LAG), Lys-23, Asn-51, Asp-69, and Asp-99 each bind GTP. Position 99 (Asp-99) interacts with Mg(2+).

The protein belongs to the MobA family. Monomer. It depends on Mg(2+) as a cofactor.

The protein localises to the cytoplasm. It carries out the reaction Mo-molybdopterin + GTP + H(+) = Mo-molybdopterin guanine dinucleotide + diphosphate. Transfers a GMP moiety from GTP to Mo-molybdopterin (Mo-MPT) cofactor (Moco or molybdenum cofactor) to form Mo-molybdopterin guanine dinucleotide (Mo-MGD) cofactor. The sequence is that of Molybdenum cofactor guanylyltransferase from Yersinia pseudotuberculosis serotype O:1b (strain IP 31758).